The chain runs to 259 residues: Hydroxyacylglutathione hydrolase (259 aa).

Positions 56, 58, 60, 61, 112, 133, and 171 each coordinate Zn(2+).

Belongs to the metallo-beta-lactamase superfamily. Glyoxalase II family. Monomer. It depends on Zn(2+) as a cofactor.

The enzyme catalyses an S-(2-hydroxyacyl)glutathione + H2O = a 2-hydroxy carboxylate + glutathione + H(+). It participates in secondary metabolite metabolism; methylglyoxal degradation; (R)-lactate from methylglyoxal: step 2/2. Functionally, thiolesterase that catalyzes the hydrolysis of S-D-lactoyl-glutathione to form glutathione and D-lactic acid. The protein is Hydroxyacylglutathione hydrolase of Pseudomonas entomophila (strain L48).